We begin with the raw amino-acid sequence, 197 residues long: Recombination protein RecR (197 aa).

The C4-type zinc-finger motif lies at 57-72 (CSVCFAITEDDPCWIC). A Toprim domain is found at 79 to 174 (GTICVVEEPQ…KVTRLAHGIP (96 aa)).

This sequence belongs to the RecR family.

Functionally, may play a role in DNA repair. It seems to be involved in an RecBC-independent recombinational process of DNA repair. It may act with RecF and RecO. The sequence is that of Recombination protein RecR from Geobacter sp. (strain M21).